A 175-amino-acid polypeptide reads, in one-letter code: NADH-ubiquinone oxidoreductase chain 6 (175 aa).

6 helical membrane-spanning segments follow: residues 1-21 (MMAY…VGFS), 25-45 (SPIY…GIVM), 47-67 (FGGS…MLVV), 87-107 (AAVL…VLYV), 116-136 (VFNF…FGVF), and 149-169 (YGVW…LVIL).

This sequence belongs to the complex I subunit 6 family. Core subunit of respiratory chain NADH dehydrogenase (Complex I) which is composed of 45 different subunits.

The protein localises to the mitochondrion inner membrane. It carries out the reaction a ubiquinone + NADH + 5 H(+)(in) = a ubiquinol + NAD(+) + 4 H(+)(out). Functionally, core subunit of the mitochondrial membrane respiratory chain NADH dehydrogenase (Complex I) which catalyzes electron transfer from NADH through the respiratory chain, using ubiquinone as an electron acceptor. Essential for the catalytic activity and assembly of complex I. The chain is NADH-ubiquinone oxidoreductase chain 6 (MT-ND6) from Ceratotherium simum (White rhinoceros).